Reading from the N-terminus, the 450-residue chain is MKTVTEFQNKNILVLGIAKSGYAAATLLQKLGANVIVNDGKPLAENVLAAELQAKGMDVVCGGHPLELLERNISLVVKNPGIPYSNPILVAAKEKQIPIVTEVELAYRISEAPFVGITGSNGKTTTTMLTFEMLKEGQKHPVIAGNIGTVACEVAQDAKENEVVVTELSSFQLMGVELFQPKIAAFLNLFEAHLDYHGTKKEYGLAKANIFKNQTENDYSVINADDADVMALSAYSKGQKVLFSTTKEIEDGACIKDNALYFKGEKVVEVGDIVLPGQHNLENILAAMSIAKLLGVSNKAITAVLKRFTGVKHRLEYVTTINNRKFYNDSKATNMLATEKALSAFTQPTVLLAGGLDRGNEFDDLIPYFKNVKAIVTFGQTAPKLVRAAEKAGLDTIESVDTLDEAVVKAYAHSTDGDVILLSPACASWDQFKTFEERGDIFIQAVHKLI.

119 to 125 (GSNGKTT) contributes to the ATP binding site.

This sequence belongs to the MurCDEF family.

The protein localises to the cytoplasm. The enzyme catalyses UDP-N-acetyl-alpha-D-muramoyl-L-alanine + D-glutamate + ATP = UDP-N-acetyl-alpha-D-muramoyl-L-alanyl-D-glutamate + ADP + phosphate + H(+). Its pathway is cell wall biogenesis; peptidoglycan biosynthesis. Cell wall formation. Catalyzes the addition of glutamate to the nucleotide precursor UDP-N-acetylmuramoyl-L-alanine (UMA). In Bacillus cereus (strain AH187), this protein is UDP-N-acetylmuramoylalanine--D-glutamate ligase.